Consider the following 151-residue polypeptide: Putative pre-16S rRNA nuclease (151 aa).

This sequence belongs to the YqgF nuclease family.

The protein localises to the cytoplasm. Its function is as follows. Could be a nuclease involved in processing of the 5'-end of pre-16S rRNA. The polypeptide is Putative pre-16S rRNA nuclease (Myxococcus xanthus (strain DK1622)).